Here is a 391-residue protein sequence, read N- to C-terminus: 3-ketoacyl-CoA thiolase (391 aa).

Catalysis depends on Cys-95, which acts as the Acyl-thioester intermediate. Active-site proton acceptor residues include His-347 and Cys-377.

It belongs to the thiolase-like superfamily. Thiolase family. In terms of assembly, heterotetramer of two alpha chains (FadB) and two beta chains (FadA).

It localises to the cytoplasm. The catalysed reaction is an acyl-CoA + acetyl-CoA = a 3-oxoacyl-CoA + CoA. The protein operates within lipid metabolism; fatty acid beta-oxidation. Functionally, catalyzes the final step of fatty acid oxidation in which acetyl-CoA is released and the CoA ester of a fatty acid two carbons shorter is formed. This Marinomonas sp. (strain MWYL1) protein is 3-ketoacyl-CoA thiolase.